The following is a 214-amino-acid chain: Thymidylate kinase (214 aa).

7 to 14 (GIEGAGKT) provides a ligand contact to ATP.

It belongs to the thymidylate kinase family.

It catalyses the reaction dTMP + ATP = dTDP + ADP. Its function is as follows. Phosphorylation of dTMP to form dTDP in both de novo and salvage pathways of dTTP synthesis. In Desulfosudis oleivorans (strain DSM 6200 / JCM 39069 / Hxd3) (Desulfococcus oleovorans), this protein is Thymidylate kinase.